The sequence spans 151 residues: Ubiquitin-conjugating enzyme E2 2 (151 aa).

Positions Ala4 to Glu150 constitute a UBC core domain. Cys88 acts as the Glycyl thioester intermediate in catalysis.

Belongs to the ubiquitin-conjugating enzyme family.

Its subcellular location is the cytoplasm. It is found in the nucleus. It carries out the reaction S-ubiquitinyl-[E1 ubiquitin-activating enzyme]-L-cysteine + [E2 ubiquitin-conjugating enzyme]-L-cysteine = [E1 ubiquitin-activating enzyme]-L-cysteine + S-ubiquitinyl-[E2 ubiquitin-conjugating enzyme]-L-cysteine.. Its pathway is protein modification; protein ubiquitination. Functionally, catalyzes the covalent attachment of ubiquitin to other proteins. Plays a role in transcription regulation by catalyzing the monoubiquitination of histone H2B to form H2BK123ub1. H2BK123ub1 gives a specific tag for epigenetic transcriptional activation and is also a prerequisite for H3K4me and H3K79me formation. Also involved in postreplication repair of UV-damaged DNA, in N-end rule-dependent protein degradation and in sporulation. The polypeptide is Ubiquitin-conjugating enzyme E2 2 (mus-8) (Neurospora crassa (strain ATCC 24698 / 74-OR23-1A / CBS 708.71 / DSM 1257 / FGSC 987)).